The sequence spans 172 residues: Large ribosomal subunit protein uL10 (172 aa).

This sequence belongs to the universal ribosomal protein uL10 family. As to quaternary structure, part of the ribosomal stalk of the 50S ribosomal subunit. The N-terminus interacts with L11 and the large rRNA to form the base of the stalk. The C-terminus forms an elongated spine to which L12 dimers bind in a sequential fashion forming a multimeric L10(L12)X complex.

Forms part of the ribosomal stalk, playing a central role in the interaction of the ribosome with GTP-bound translation factors. The sequence is that of Large ribosomal subunit protein uL10 from Bartonella tribocorum (strain CIP 105476 / IBS 506).